We begin with the raw amino-acid sequence, 136 residues long: Protein Tat (136 aa).

The cysteine-rich stretch occupies residues 22 to 37; the sequence is CTNCYCKKCCFHCPVC. Residues 38–48 are core; sequence FTKKALGISYG. Positions 48-57 are enriched in basic residues; it reads GRKRRGRKSA. Residues 48-136 form a disordered region; the sequence is GRKRRGRKSA…SGSSGSACKH (89 aa). A Nuclear localization signal, and RNA-binding (TAR) motif is present at residues 49–55; that stretch reads RKRRGRK. Positions 58–73 are enriched in polar residues; that stretch reads VHSTNNQDPVRQQSLP. A compositionally biased stretch (low complexity) spans 104-120; that stretch reads SSVSSGRTSGTSSSGYT. Over residues 123–136 the composition is skewed to polar residues; that stretch reads FKTSSGSSGSACKH.

Belongs to the lentiviruses Tat family. In terms of assembly, interacts with host CCNT1. Associates with the P-TEFb complex composed at least of Tat, P-TEFb (CDK9 and CCNT1), TAR RNA, RNA Pol II. Interacts with CCNT2; the resulting complex is unable to bind to TAR RNA.

Its subcellular location is the host nucleus. It localises to the host nucleolus. In terms of biological role, transcriptional activator that increases RNA Pol II processivity, thereby increasing the level of full-length viral transcripts. Recognizes a hairpin structure at the 5'-LTR of the nascent viral mRNAs referred to as the transactivation responsive RNA element (TAR) and recruits the cyclin T1-CDK9 complex (P-TEFb complex) that will in turn hyperphosphorylate the RNA polymerase II to allow efficient elongation. The CDK9 component of P-TEFb and other Tat-activated kinases hyperphosphorylate the C-terminus of RNA Pol II that becomes stabilized and much more processive. Its function is as follows. Extracellular circulating Tat can be endocytosed by surrounding uninfected cells via the binding to several surface receptors. Endosomal low pH allows Tat to cross the endosome membrane to enter the cytosol and eventually further translocate into the nucleus, thereby inducing severe cell dysfunctions ranging from cell activation to cell death. Through. This Simian immunodeficiency virus (isolate TAN1) (SIV-cpz) protein is Protein Tat.